We begin with the raw amino-acid sequence, 183 residues long: Ran guanine nucleotide release factor (183 aa).

Positions 23-66 (ELRQIPDNQEVFAHSQTDQSIIIELLEYQSQVQDADAARYHFED) are interaction with RAN.

Belongs to the MOG1 family. Monomer. Interacts with ran.

It is found in the nucleus. The protein localises to the cytoplasm. The protein resides in the perinuclear region. Its subcellular location is the cell membrane. May regulate the intracellular trafficking of RAN. Promotes guanine nucleotide release from RAN and inhibits binding of new GTP. Plays a role in the regulation of the levels of GTP-bound RAN in the nucleus. Required for normal expression of the ion channel hcn4 and for normal expression of the cardiac transcription factors nkx2.5, gata4 and hand2 during embryonic development. Required for normal embryonic heart development and normal heart rate. This Danio rerio (Zebrafish) protein is Ran guanine nucleotide release factor.